Here is a 345-residue protein sequence, read N- to C-terminus: MTNLTIALDAMGGDFGPRITVPACLRALASNPHLKILLVGQPDSISPLLANQNAELISRLHVIPAEHIVANDAKPSHAIRASKGTSMRVALDLVKTGEAQACVSAGNTGVLMGLAKLRLKAIDGIERPALVSVLPNQKKSKTVVLDLGANVNCDSQMLVQFAVMGAVMAEEIAGIHSPKVALLNIGEEESKGLDNIREAATVLKATPNINYIGYVEGNELLTGKTDVLVCDGFAGNVSLKTMEGVIRVFLSLIKSSTGDNKKTSWWMKLLKKWLQKRLNKRFGHMNPDQYNGASLLGLRGIVIKSHGGANENAFTAAIEQAVQAIERQIPERIASRLNTVLPKSD.

Belongs to the PlsX family. In terms of assembly, homodimer. Probably interacts with PlsY.

The protein resides in the cytoplasm. The enzyme catalyses a fatty acyl-[ACP] + phosphate = an acyl phosphate + holo-[ACP]. The protein operates within lipid metabolism; phospholipid metabolism. Its function is as follows. Catalyzes the reversible formation of acyl-phosphate (acyl-PO(4)) from acyl-[acyl-carrier-protein] (acyl-ACP). This enzyme utilizes acyl-ACP as fatty acyl donor, but not acyl-CoA. This is Phosphate acyltransferase from Proteus mirabilis (strain HI4320).